Here is a 333-residue protein sequence, read N- to C-terminus: L-lactate dehydrogenase A chain (333 aa).

A2 bears the N-acetylalanine mark. NAD(+) contacts are provided by residues 30–58 and R100; that span reads GAVGMACAISILMKDLADEVALVDVMEDK. Positions 107, 139, and 170 each coordinate substrate. Position 139 (N139) interacts with NAD(+). The Proton acceptor role is filled by H194. T249 contributes to the substrate binding site.

Belongs to the LDH/MDH superfamily. LDH family. Homotetramer.

It localises to the cytoplasm. The catalysed reaction is (S)-lactate + NAD(+) = pyruvate + NADH + H(+). It functions in the pathway fermentation; pyruvate fermentation to lactate; (S)-lactate from pyruvate: step 1/1. Its function is as follows. Interconverts simultaneously and stereospecifically pyruvate and lactate with concomitant interconversion of NADH and NAD(+). This is L-lactate dehydrogenase A chain (ldha) from Squalus acanthias (Spiny dogfish).